Here is a 367-residue protein sequence, read N- to C-terminus: MNLHPRDIDETPDRDAAAAALAVLRRWASGATSTEISELDPSVARLLPDAALSNYPDLSRQYPEDFTVDATYRAGLPDLQNGPSSLIRGAKQQIQHVGISNFRLPIRFHRKEGDDLTLETSVTGTVSLEAGKKGINMSRIMRSFYKHAERTFSFEVIEAALDDYMTDLDSFDARIQMRFSYPERIESLRSGLSGYQYYDIALELVEQGGERLKIMHLDYVYSSTCPCSLELSEHARSSRGQLATPHSQRSVARLSVVVDGDASCLWFEDLIALCRRAVPTETQVMVKREDEQAFAELNAANPIFVEDAARLFCAELLADHRIGDFRVVASHQESLHSHDAVSVLTEGATFATASLDPRLFATLFHVG.

This sequence belongs to the GTP cyclohydrolase IV family.

The enzyme catalyses GTP + H2O = 7,8-dihydroneopterin 3'-triphosphate + formate + H(+). Its pathway is cofactor biosynthesis; 7,8-dihydroneopterin triphosphate biosynthesis; 7,8-dihydroneopterin triphosphate from GTP: step 1/1. Converts GTP to 7,8-dihydroneopterin triphosphate. This Ruegeria pomeroyi (strain ATCC 700808 / DSM 15171 / DSS-3) (Silicibacter pomeroyi) protein is GTP cyclohydrolase FolE2.